The following is a 517-amino-acid chain: Probable cytosol aminopeptidase (517 aa).

Mn(2+)-binding residues include Lys279 and Asp284. The active site involves Lys291. 3 residues coordinate Mn(2+): Asp302, Asp361, and Glu363. Arg365 is an active-site residue.

This sequence belongs to the peptidase M17 family. Mn(2+) is required as a cofactor.

It is found in the cytoplasm. The catalysed reaction is Release of an N-terminal amino acid, Xaa-|-Yaa-, in which Xaa is preferably Leu, but may be other amino acids including Pro although not Arg or Lys, and Yaa may be Pro. Amino acid amides and methyl esters are also readily hydrolyzed, but rates on arylamides are exceedingly low.. It carries out the reaction Release of an N-terminal amino acid, preferentially leucine, but not glutamic or aspartic acids.. Presumably involved in the processing and regular turnover of intracellular proteins. Catalyzes the removal of unsubstituted N-terminal amino acids from various peptides. This is Probable cytosol aminopeptidase from Streptomyces coelicolor (strain ATCC BAA-471 / A3(2) / M145).